The chain runs to 218 residues: uncharacterized protein (218 aa).

The ABC transporter domain occupies 2–216; it reads IEVLNLTKKI…ETSEKVIYKK (215 aa). 34–41 serves as a coordination point for ATP; sequence GSNGSGKT.

This sequence belongs to the ABC transporter superfamily.

This is an uncharacterized protein from Bacillus subtilis (strain 168).